The chain runs to 87 residues: Small ribosomal subunit protein bS20 (87 aa).

The span at 1-10 (MANIKSKQKR) shows a compositional bias: basic residues. A disordered region spans residues 1–27 (MANIKSKQKRILTNEKSRQRNKSVRSA).

The protein belongs to the bacterial ribosomal protein bS20 family.

Its function is as follows. Binds directly to 16S ribosomal RNA. The chain is Small ribosomal subunit protein bS20 from Corynebacterium aurimucosum (strain ATCC 700975 / DSM 44827 / CIP 107346 / CN-1) (Corynebacterium nigricans).